A 198-amino-acid chain; its full sequence is dTTP/UTP pyrophosphatase (198 aa).

The active-site Proton acceptor is D69.

Belongs to the Maf family. YhdE subfamily. A divalent metal cation serves as cofactor.

The protein localises to the cytoplasm. It carries out the reaction dTTP + H2O = dTMP + diphosphate + H(+). The enzyme catalyses UTP + H2O = UMP + diphosphate + H(+). Functionally, nucleoside triphosphate pyrophosphatase that hydrolyzes dTTP and UTP. May have a dual role in cell division arrest and in preventing the incorporation of modified nucleotides into cellular nucleic acids. The sequence is that of dTTP/UTP pyrophosphatase from Idiomarina loihiensis (strain ATCC BAA-735 / DSM 15497 / L2-TR).